A 466-amino-acid chain; its full sequence is Asparagine--tRNA ligase (466 aa).

It belongs to the class-II aminoacyl-tRNA synthetase family. Homodimer.

Its subcellular location is the cytoplasm. The catalysed reaction is tRNA(Asn) + L-asparagine + ATP = L-asparaginyl-tRNA(Asn) + AMP + diphosphate + H(+). This chain is Asparagine--tRNA ligase, found in Shewanella sp. (strain MR-7).